The chain runs to 251 residues: MKFVVVFASCVLAVSAGVTEMSAASMSSSNKELEEKLYNSILTGDYDSAVRQSLEYENQGKGSIIQNVVNNLIIDGSRNTMEYCYKLWVGNGQHIVRKYFPYNFRLIMAGNFVKLIYRNYNLALKLGPTLDPANERLAYGDGKEKNSDLISWKSHYLVGEQHSVLQDPPTLSYNQYLKLSSTTDCNTQDRIIFGTNTADTTREQWFLQPTKYENDVLFFIYNREVQRVALKLGRIVDASGDRSGIWTRWMK.

A signal peptide spans 1–16; that stretch reads MKFVVVFASCVLAVSA.

It belongs to the 30 kDa lipoprotein family.

The protein resides in the secreted. In Bombyx mori (Silk moth), this protein is Low molecular mass lipoprotein PBMHPC-21.